A 366-amino-acid polypeptide reads, in one-letter code: Polyprenyl transferase AOL_s00215g276 (366 aa).

The tract at residues 1-22 (MESIIARPRTRSSAKEKTQTMS) is disordered. Helical transmembrane passes span 53–73 (LHTLESLLCVYPAIWGACLSA), 85–105 (FLSVLFANWISMTIAHMAFCT), 137–157 (IIAFIVEMGLTVYISYATLGF), 160–180 (ALVCAPVWIASTIYPFMKRVV), 185–205 (LVLGPIIGMAVFPGWVSVAGN), 212–232 (AVPMFLATSAWVVYFDTIYAT), and 253–273 (HMHQFLGFLGSIQIALLSFTA). A glycan (N-linked (GlcNAc...) asparagine) is linked at Asn277. Transmembrane regions (helical) follow at residues 281-301 (LFWSLGVCVWGLNIPFHLLSL) and 312-332 (VFLMNILLGLWITIVCVIELW). Asn352 carries an N-linked (GlcNAc...) asparagine glycan.

The protein belongs to the UbiA prenyltransferase family. Mg(2+) is required as a cofactor.

Its subcellular location is the membrane. It participates in secondary metabolite biosynthesis; terpenoid biosynthesis. In terms of biological role, polyprenyl transferase; part of the gene cluster that mediates the biosynthesis of sesquiterpenyl epoxy-cyclohexenoids (SECs) such as anthrobotrisins and arthrosporols, metabolites that possess a novel hybrid carbon skeleton consisting of a polyketide-derived epoxycyclohexenol combined with a terpenoid-derived monocyclic sesquiterpenol substructure (PKS-PTS hybrid). The SEC pathway plays an important role for fungal soil colonization via decreasing fungal nematode-capturing ability. Within the pathway, the polyprenyl transferase catalyzes the farnesylation of toluquinol to yield farnesyl hydroquinone, the first hybrid precursor for biosynthesis of SECs, and farnesyl quinone (34) might be the key precursor for the epoxy ring formation. The pathway begins with the biosynthesis of 6-methylsalicylic acid (6-MSA), the first precursor of the polyketide-derived epoxycyclohexenol in arthrosporols, by the polyketide synthase (PKS) AOL_s00215g283 via condensation of 1 acetate and 3 malonate units. The 6-methylsalicylic acid decarboxylase AOL_s00215g281 then catalyzes the decarboxylation of 6-methylsalicylic acid to yield m-cresol. The cytochrome P450 monooxygenase AOL_s00215g282 further oxidizes m-cresol to yield toluquinol. With the assistance of the oxidoreductase AOL_s00215g277, the polyprenyl transferase AOL_s00215g276 catalyzes the farnesylation of toluquinol to produce farnesyl hydroquinone, the hybrid precursor for biosynthesis of SECs. Farnesyl hydroquinone undergoes epoxidation and then subsequent dehydrogenation to form farnesyl epoxy-quinone, the first and simplest SEC. The cytochrome P450 monooxygenase AOL_s00215g278 and the FAD-dependent monooxygenase AOL_s00215g279 might be involved in the oxygenation of the phenol moiety, most likely in the epoxy formation. The cytochrome P450 monooxygenases AOL_s00215g274 and AOL_s00215g280 are involved in specific regional ketone reductions at respectively C-4 and C-1 of farnesyl epoxy-quinone PubMed:33823587. The sequence is that of Polyprenyl transferase AOL_s00215g276 from Arthrobotrys oligospora (strain ATCC 24927 / CBS 115.81 / DSM 1491) (Nematode-trapping fungus).